The chain runs to 509 residues: Zinc finger CCCH-type with G patch domain-containing protein (509 aa).

The segment at 41–61 (TRGSEPEATSDTKTPETSDNI) is disordered. Over residues 47–58 (EATSDTKTPETS) the composition is skewed to polar residues. The C3H1-type zinc finger occupies 155–178 (PCNYFLEGECRFDEVRCRYSHGAL). The interval 254-278 (DDDLTSESEESNETDGSDAGNDSDM) is disordered. One can recognise a G-patch domain in the interval 310–356 (TRGIGSKLMANMGYIHGTGLGSDGRGIVTPVSAQILPQGRSLDACME). The segment at 410 to 433 (GSQQTENANKKTKPNNLQQHSNKT) is disordered. The segment covering 423–433 (PNNLQQHSNKT) has biased composition (polar residues).

Its subcellular location is the nucleus. Its function is as follows. Transcription repressor. This chain is Zinc finger CCCH-type with G patch domain-containing protein, found in Drosophila mojavensis (Fruit fly).